We begin with the raw amino-acid sequence, 88 residues long: Small ribosomal subunit protein uS19 (88 aa).

It belongs to the universal ribosomal protein uS19 family.

Its function is as follows. Protein S19 forms a complex with S13 that binds strongly to the 16S ribosomal RNA. The chain is Small ribosomal subunit protein uS19 (rpsS) from Mycoplasma capricolum subsp. capricolum (strain California kid / ATCC 27343 / NCTC 10154).